We begin with the raw amino-acid sequence, 211 residues long: Thiamine-phosphate synthase (211 aa).

4-amino-2-methyl-5-(diphosphooxymethyl)pyrimidine-binding positions include 35 to 39 and Asn-67; that span reads QLRDK. Residues Asp-68 and Asp-87 each contribute to the Mg(2+) site. A 4-amino-2-methyl-5-(diphosphooxymethyl)pyrimidine-binding site is contributed by Ser-106. 132–134 serves as a coordination point for 2-[(2R,5Z)-2-carboxy-4-methylthiazol-5(2H)-ylidene]ethyl phosphate; the sequence is TGS. Lys-135 lines the 4-amino-2-methyl-5-(diphosphooxymethyl)pyrimidine pocket. Residues Gly-163 and 183-184 each bind 2-[(2R,5Z)-2-carboxy-4-methylthiazol-5(2H)-ylidene]ethyl phosphate; that span reads IS.

The protein belongs to the thiamine-phosphate synthase family. Requires Mg(2+) as cofactor.

It catalyses the reaction 2-[(2R,5Z)-2-carboxy-4-methylthiazol-5(2H)-ylidene]ethyl phosphate + 4-amino-2-methyl-5-(diphosphooxymethyl)pyrimidine + 2 H(+) = thiamine phosphate + CO2 + diphosphate. The enzyme catalyses 2-(2-carboxy-4-methylthiazol-5-yl)ethyl phosphate + 4-amino-2-methyl-5-(diphosphooxymethyl)pyrimidine + 2 H(+) = thiamine phosphate + CO2 + diphosphate. It carries out the reaction 4-methyl-5-(2-phosphooxyethyl)-thiazole + 4-amino-2-methyl-5-(diphosphooxymethyl)pyrimidine + H(+) = thiamine phosphate + diphosphate. It participates in cofactor biosynthesis; thiamine diphosphate biosynthesis; thiamine phosphate from 4-amino-2-methyl-5-diphosphomethylpyrimidine and 4-methyl-5-(2-phosphoethyl)-thiazole: step 1/1. Its function is as follows. Condenses 4-methyl-5-(beta-hydroxyethyl)thiazole monophosphate (THZ-P) and 2-methyl-4-amino-5-hydroxymethyl pyrimidine pyrophosphate (HMP-PP) to form thiamine monophosphate (TMP). In Methanoculleus marisnigri (strain ATCC 35101 / DSM 1498 / JR1), this protein is Thiamine-phosphate synthase.